We begin with the raw amino-acid sequence, 251 residues long: MTKLRLKSKDEIKKIKASASLLALTLLEVERNIVPGISTKELDLIAYDFIIKNRAKPAFKGYRGFKGTICASVNEEVIHGIPGKRKLADGDIVSIDCGVILDGFYSDMAKTFKVGNVDSSIDKLLEVTNASLYKGIAEMKVGNRILNISKAIEDYIKPFGFGIVREYTGHGVGFELHEEPSVPNYYAPFFKNIRIQEGMVLAIEPMVNLRGHKVSIKSDGWTVFASDLSYSAHFEHTVAVVDGLPLILSEV.

His79 is a binding site for substrate. The a divalent metal cation site is built by Asp96, Asp107, and His170. His177 lines the substrate pocket. Positions 204 and 235 each coordinate a divalent metal cation.

It belongs to the peptidase M24A family. Methionine aminopeptidase type 1 subfamily. Monomer. The cofactor is Co(2+). Zn(2+) serves as cofactor. It depends on Mn(2+) as a cofactor. Fe(2+) is required as a cofactor.

The enzyme catalyses Release of N-terminal amino acids, preferentially methionine, from peptides and arylamides.. Removes the N-terminal methionine from nascent proteins. The N-terminal methionine is often cleaved when the second residue in the primary sequence is small and uncharged (Met-Ala-, Cys, Gly, Pro, Ser, Thr, or Val). Requires deformylation of the N(alpha)-formylated initiator methionine before it can be hydrolyzed. In Borreliella burgdorferi (strain ATCC 35210 / DSM 4680 / CIP 102532 / B31) (Borrelia burgdorferi), this protein is Methionine aminopeptidase.